A 495-amino-acid chain; its full sequence is Glycerol kinase (495 aa).

T14 lines the ADP pocket. T14, T15, and S16 together coordinate ATP. T14 is a sn-glycerol 3-phosphate binding site. Position 18 (R18) interacts with ADP. Positions 84, 85, 136, and 246 each coordinate sn-glycerol 3-phosphate. Glycerol-binding residues include R84, E85, Y136, D246, and Q247. Residues T268 and G312 each coordinate ADP. ATP-binding residues include T268, G312, Q316, and G413. ADP contacts are provided by G413 and N417.

The protein belongs to the FGGY kinase family.

It catalyses the reaction glycerol + ATP = sn-glycerol 3-phosphate + ADP + H(+). It participates in polyol metabolism; glycerol degradation via glycerol kinase pathway; sn-glycerol 3-phosphate from glycerol: step 1/1. With respect to regulation, inhibited by fructose 1,6-bisphosphate (FBP). In terms of biological role, key enzyme in the regulation of glycerol uptake and metabolism. Catalyzes the phosphorylation of glycerol to yield sn-glycerol 3-phosphate. In Bdellovibrio bacteriovorus (strain ATCC 15356 / DSM 50701 / NCIMB 9529 / HD100), this protein is Glycerol kinase.